The primary structure comprises 86 residues: Co-chaperonin GroES (86 aa).

This sequence belongs to the GroES chaperonin family. Heptamer of 7 subunits arranged in a ring. Interacts with the chaperonin GroEL.

The protein resides in the cytoplasm. Its function is as follows. Together with the chaperonin GroEL, plays an essential role in assisting protein folding. The GroEL-GroES system forms a nano-cage that allows encapsulation of the non-native substrate proteins and provides a physical environment optimized to promote and accelerate protein folding. GroES binds to the apical surface of the GroEL ring, thereby capping the opening of the GroEL channel. The polypeptide is Co-chaperonin GroES (Campylobacter jejuni subsp. doylei (strain ATCC BAA-1458 / RM4099 / 269.97)).